Consider the following 429-residue polypeptide: Sex determination protein fox-1 (429 aa).

A compositionally biased stretch (low complexity) spans 156-180; it reads ATTAGSTNGSAAVTQPDPSTSSGPD. The interval 156–188 is disordered; that stretch reads ATTAGSTNGSAAVTQPDPSTSSGPDGPKRLHVS. The 77-residue stretch at 183-259 folds into the RRM domain; sequence KRLHVSNIPF…RKIEVNCATA (77 aa).

Interacts with sup-12. As to expression, in males and hermaphrodites expressed in a subset of cells in the head and tail. Expressed in the pharynx, intestine and in muscles from the vulva and body wall.

The protein localises to the nucleus. Its function is as follows. RNA-binding protein that regulates tissue-specific alternative splicing events by binding to 5'-UGCAUG-3' and 5'-GCACG-3' elements. Also binds to poly(A), poly(G), poly(C), or poly(U) stretches of RNA. Plays a role in the sex determination pathway and X chromosome dosage compensation, and together with sex-1 is involved in making the distinction between one and two X-chromosomes. Binds to 5'-GCAUG-3' and 5'-GCACG-3' elements in intron 6 of the pre-mRNA of the sex-determining factor xol-1 to promote its alternative splicing and together with sex-1 negatively regulates the expression of xol-1 to promote hermaphrodite development. Negatively regulates the expression of the active isoform of xol-1 (isoform b) by promoting intron 6 retention and the deletion of exon 7 coding sequences in hermaphrodite embryos. Furthermore, binding to the pre-mRNA of xol-1 can also direct the use of an alternative 3' splice site enabling the xol-1 transcript to be trans-spliced to unrelated genes on chromosome 2, which also leads to xol-1 exon 7 deletion. Does not seem to regulate the retention of introns 1 to 5 of xol-1 pre-mRNA. Plays a role in the association of the dosage compensation complex proteins dpy-27 and sdc-3 with the hermaphrodite X chromosomes. Binds to 5'-UGCAUG-3' elements in intron 7 of the pre-mRNA of unc-32 to promote its alternative splicing in neuronal tissues. Binds to 5'-UGCAUG-3' elements in intron 4 of the pre-mRNA of egl-15 to promote its alternative splicing in body wall muscle tissues. Promotes binding of RNA-binding protein sup-12 to target RNA. Plays a role in male mating behavior. The polypeptide is Sex determination protein fox-1 (Caenorhabditis elegans).